Reading from the N-terminus, the 445-residue chain is Protein trichome berefringence-like 7 (445 aa).

A helical; Signal-anchor for type II membrane protein membrane pass occupies residues I69–V89. Positions G188–S190 match the GDS motif motif. Positions D418–N432 match the DCXHWCLPGXXDXWN motif motif.

Belongs to the PC-esterase family. TBL subfamily.

The protein resides in the membrane. Functionally, may act as a bridging protein that binds pectin and other cell wall polysaccharides. Probably involved in maintaining esterification of pectins. May be involved in the specific O-acetylation of cell wall polymers. In Arabidopsis thaliana (Mouse-ear cress), this protein is Protein trichome berefringence-like 7 (TBL7).